The sequence spans 190 residues: Small ribosomal subunit protein eS7 (190 aa).

This sequence belongs to the eukaryotic ribosomal protein eS7 family.

This is Small ribosomal subunit protein eS7 (RpS7) from Manduca sexta (Tobacco hawkmoth).